We begin with the raw amino-acid sequence, 207 residues long: Large ribosomal subunit protein bL25 (207 aa).

The protein belongs to the bacterial ribosomal protein bL25 family. CTC subfamily. As to quaternary structure, part of the 50S ribosomal subunit; part of the 5S rRNA/L5/L18/L25 subcomplex. Contacts the 5S rRNA. Binds to the 5S rRNA independently of L5 and L18.

Its function is as follows. This is one of the proteins that binds to the 5S RNA in the ribosome where it forms part of the central protuberance. The protein is Large ribosomal subunit protein bL25 of Orientia tsutsugamushi (strain Ikeda) (Rickettsia tsutsugamushi).